Consider the following 495-residue polypeptide: Probable cytosol aminopeptidase (495 aa).

K258 and D263 together coordinate Mn(2+). K270 is an active-site residue. The Mn(2+) site is built by D281, D340, and E342. The active site involves R344.

This sequence belongs to the peptidase M17 family. Mn(2+) serves as cofactor.

The protein localises to the cytoplasm. It carries out the reaction Release of an N-terminal amino acid, Xaa-|-Yaa-, in which Xaa is preferably Leu, but may be other amino acids including Pro although not Arg or Lys, and Yaa may be Pro. Amino acid amides and methyl esters are also readily hydrolyzed, but rates on arylamides are exceedingly low.. The catalysed reaction is Release of an N-terminal amino acid, preferentially leucine, but not glutamic or aspartic acids.. Presumably involved in the processing and regular turnover of intracellular proteins. Catalyzes the removal of unsubstituted N-terminal amino acids from various peptides. This Leptospira interrogans serogroup Icterohaemorrhagiae serovar copenhageni (strain Fiocruz L1-130) protein is Probable cytosol aminopeptidase.